Reading from the N-terminus, the 280-residue chain is Thioesterase pynI (280 aa).

Acidic residues predominate over residues L136–N145. Positions L136–D167 are disordered.

It belongs to the AMT4 thioesterase family.

The protein operates within secondary metabolite biosynthesis. Functionally, thioesterase; part of the gene cluster that mediates the biosynthesis of pyranonigrins, a family of antioxidative compounds. The first step of pyranonigrins biosynthesis is performed by the hybrid PKS-NRPS synthetase that condenses 6 malonyl-CoA units to an acetyl starter unit, to form a 1,3,5-trioxotetradecane-6,8-dienyl-ACP. The enoyl reductase (ER) domain of pynA is likely to be functional during the first two rounds of polyketide chain extension, to generate the saturated C-C bonds of the alkyl side chain. PynA subsequently forms the amide bond between the acyl chain and L-serine. Although pynA has a terminal reductase domain, it appears to require the thioesterase pynI for the release of the straight-chain intermediate from pynA via the formation of a tetramic acid pyranonigrin J. The methyltransferase pynC then coverts pyranonigrin J to pyranonigrin I via N-methylation. The FAD-dependent monooxygenase pynG catalyzes an epoxidation-mediated cyclization to form the dihydro-gamma-pyrone moiety, followed by pynD-catalyzed oxidation of the alcohol to the ketone and enolization to yield the characteristic tetramic acid-fused gamma-pyrone core of pyranonigrin H. Pyranonigrin H is substrate of pynH for dehydration-mediated exo-methylene formation from the serine side chain to produce pyranonigrin E, before the oxidase pynE reduces the exo-methylene of pyranonigrin E into a pendant methyl to form pyranonigrin G. The FAD-linked oxidoreductase pynB performs the reverse reaction and converts pyranonigrin G back to pyranonigrin E. The chain is Thioesterase pynI from Aspergillus niger (strain ATCC MYA-4892 / CBS 513.88 / FGSC A1513).